A 203-amino-acid polypeptide reads, in one-letter code: MAAVTVNSAKRGLRAELKQRLRALSAEERLRQSLLLTQKVIAHNQYQNSKRISIFLSMQDEVETEVIIKDIFKQGKICFIPRYQFQSNHMDMVRLTSSEEIALLPKTSWNIHQPGEGDVREEALSTGGLDLIFLPGLGFDKDGNRLGRGKGYYDTYLKRCVQHQEVKPYTMALAFKEQICPQIPVDEHDMKVDEVLYEDSPAS.

At Ala2 the chain carries N-acetylalanine. Residues Lys10–Arg14 and Arg14 each bind ATP. Substrate is bound by residues Leu56, Glu61, and Arg148–Tyr152. Position 145–153 (Arg145–Tyr153) interacts with ATP. Residues Asp154 and Asp189 each contribute to the Mg(2+) site.

The protein belongs to the 5-formyltetrahydrofolate cyclo-ligase family. In terms of assembly, monomer. Mg(2+) serves as cofactor.

The protein resides in the cytoplasm. It carries out the reaction (6S)-5-formyl-5,6,7,8-tetrahydrofolate + ATP = (6R)-5,10-methenyltetrahydrofolate + ADP + phosphate. In terms of biological role, contributes to tetrahydrofolate metabolism. Helps regulate carbon flow through the folate-dependent one-carbon metabolic network that supplies carbon for the biosynthesis of purines, thymidine and amino acids. Catalyzes the irreversible conversion of 5-formyltetrahydrofolate (5-CHO-H(4)PteGlu) to yield 5,10-methenyltetrahydrofolate. This chain is 5-formyltetrahydrofolate cyclo-ligase (Mthfs), found in Mus musculus (Mouse).